The following is a 394-amino-acid chain: Choline/ethanolamine kinase (394 aa).

Alanine 2 is modified (N-acetylalanine). The tract at residues 22-42 is disordered; the sequence is GLLDAKCPEPIPNRRRSSSLS. Residues 75–81, arginine 104, 146–152, glutamine 244, and aspartate 264 contribute to the ATP site; these read SGGLSNL and QYLPSRP. 77–79 is a binding site for substrate; that stretch reads GLS.

This sequence belongs to the choline/ethanolamine kinase family. Homodimer, and heterodimer with CHKA.

The catalysed reaction is choline + ATP = phosphocholine + ADP + H(+). It carries out the reaction ethanolamine + ATP = phosphoethanolamine + ADP + H(+). It participates in phospholipid metabolism; phosphatidylethanolamine biosynthesis; phosphatidylethanolamine from ethanolamine: step 1/3. Has a key role in phospholipid metabolism, and catalyzes the first step of phosphatidylethanolamine and phosphatidylcholine biosynthesis. This is Choline/ethanolamine kinase (Chkb) from Rattus norvegicus (Rat).